We begin with the raw amino-acid sequence, 25 residues long: Galactose-binding lectin-2 (25 aa).

As to quaternary structure, homodimer. In terms of processing, N-glycosylated.

D-galactose specific lectin. Binds in decreasing order of affinity: melibiose, N-acetyllactosamine, D-galacturonic acid, D-galactose, methyl-alpha-D-galactoside, D-galactose, methyl-alpha-D-galactopyranoside, methyl-beta-D-galactopyranoside and lactose. Binds also the glycoproteins globotriose, asialofetuin and mucin. Possesses glycan-dependent cytotoxic activity against Burkitt's lymphoma Raji cells and erythroleukemia K562 cells. Has calcium-independent hemagglutinating activity towards human erythrocytes. This Aplysia kurodai (Kuroda's sea hare) protein is Galactose-binding lectin-2.